Here is a 383-residue protein sequence, read N- to C-terminus: Queuine tRNA-ribosyltransferase (383 aa).

Catalysis depends on Asp90, which acts as the Proton acceptor. Substrate contacts are provided by residues 90–94, Asp144, Gln193, and Gly227; that span reads DSGGF. Positions 258–264 are RNA binding; it reads GVGTPED. Asp277 serves as the catalytic Nucleophile. Residues 282–286 are RNA binding; important for wobble base 34 recognition; it reads TRNAR. Positions 315, 317, 320, and 346 each coordinate Zn(2+).

Belongs to the queuine tRNA-ribosyltransferase family. Homodimer. Within each dimer, one monomer is responsible for RNA recognition and catalysis, while the other monomer binds to the replacement base PreQ1. Requires Zn(2+) as cofactor.

It carries out the reaction 7-aminomethyl-7-carbaguanine + guanosine(34) in tRNA = 7-aminomethyl-7-carbaguanosine(34) in tRNA + guanine. The protein operates within tRNA modification; tRNA-queuosine biosynthesis. Its function is as follows. Catalyzes the base-exchange of a guanine (G) residue with the queuine precursor 7-aminomethyl-7-deazaguanine (PreQ1) at position 34 (anticodon wobble position) in tRNAs with GU(N) anticodons (tRNA-Asp, -Asn, -His and -Tyr). Catalysis occurs through a double-displacement mechanism. The nucleophile active site attacks the C1' of nucleotide 34 to detach the guanine base from the RNA, forming a covalent enzyme-RNA intermediate. The proton acceptor active site deprotonates the incoming PreQ1, allowing a nucleophilic attack on the C1' of the ribose to form the product. After dissociation, two additional enzymatic reactions on the tRNA convert PreQ1 to queuine (Q), resulting in the hypermodified nucleoside queuosine (7-(((4,5-cis-dihydroxy-2-cyclopenten-1-yl)amino)methyl)-7-deazaguanosine). This chain is Queuine tRNA-ribosyltransferase, found in Ralstonia pickettii (strain 12J).